The primary structure comprises 64 residues: Beta-insect depressant toxin BmKIT4 (64 aa).

One can recognise an LCN-type CS-alpha/beta domain in the interval 1 to 61; sequence DGYIRGSNGC…TWKSESNTCG (61 aa). 4 disulfides stabilise this stretch: Cys10/Cys60, Cys14/Cys35, Cys21/Cys42, and Cys25/Cys44. Cys60 bears the Cysteine amide mark.

This sequence belongs to the long (4 C-C) scorpion toxin superfamily. Sodium channel inhibitor family. Beta subfamily. In terms of tissue distribution, expressed by the venom gland.

It is found in the secreted. Functionally, depressant insect beta-toxins cause a transient contraction paralysis followed by a slow flaccid paralysis. They bind voltage-independently at site-4 of sodium channels (Nav) and shift the voltage of activation toward more negative potentials thereby affecting sodium channel activation and promoting spontaneous and repetitive firing. This toxin is active only on insects. In Olivierus martensii (Manchurian scorpion), this protein is Beta-insect depressant toxin BmKIT4.